Consider the following 703-residue polypeptide: Fatty acid oxidation complex subunit alpha (703 aa).

The enoyl-CoA hydratase stretch occupies residues 1-190; sequence MSEQKAFSLN…KLGVVDACVP (190 aa). Residues 308–703 form a 3-hydroxyacyl-CoA dehydrogenase region; the sequence is AAVKKVGVLG…TRAGEGRTFY (396 aa).

It in the N-terminal section; belongs to the enoyl-CoA hydratase/isomerase family. The protein in the central section; belongs to the 3-hydroxyacyl-CoA dehydrogenase family. As to quaternary structure, heterotetramer of two alpha chains (FadJ) and two beta chains (FadI).

It localises to the cytoplasm. It carries out the reaction a (3S)-3-hydroxyacyl-CoA = a (2E)-enoyl-CoA + H2O. It catalyses the reaction a 4-saturated-(3S)-3-hydroxyacyl-CoA = a (3E)-enoyl-CoA + H2O. The catalysed reaction is a (3S)-3-hydroxyacyl-CoA + NAD(+) = a 3-oxoacyl-CoA + NADH + H(+). The enzyme catalyses (3S)-3-hydroxybutanoyl-CoA = (3R)-3-hydroxybutanoyl-CoA. The protein operates within lipid metabolism; fatty acid beta-oxidation. Catalyzes the formation of a hydroxyacyl-CoA by addition of water on enoyl-CoA. Also exhibits 3-hydroxyacyl-CoA epimerase and 3-hydroxyacyl-CoA dehydrogenase activities. This is Fatty acid oxidation complex subunit alpha from Vibrio parahaemolyticus serotype O3:K6 (strain RIMD 2210633).